The chain runs to 1000 residues: Sop-2-related protein 1 (1000 aa).

3 disordered regions span residues 355–374 (KIMKQEEEEEKARKHGQYQQ), 379–422 (HQQH…GPSE), and 466–509 (APSE…VARG). The segment covering 390-404 (SSSSVPSTSSPSCSS) has biased composition (low complexity). Residues 406–415 (ANRKEMETVR) show a composition bias toward basic and acidic residues. Over residues 489 to 502 (GPSQQQQIPGTSQQ) the composition is skewed to low complexity. An RNA-binding region spans residues 633-720 (REQILPQQYM…LNTSSVQPSE (88 aa)). The disordered stretch occupies residues 948–1000 (HRMHSQRPPSMGNSSTSSEASSTSPTNAATATSSPASNRPTTSTAQPPTLNPT). Positions 960-992 (NSSTSSEASSTSPTNAATATSSPASNRPTTSTA) are enriched in low complexity.

In terms of assembly, binds through its N-terminal region to the N-terminal region of sop-2.

The protein resides in the nucleus. Acts synergistically with sop-2 to maintain the transcriptionally repressive state of homeotic genes throughout development. Not required to initiate repression, but to maintain it during later stages of development. Also required to repress expression of other genes. Binds RNA in a sequence-independent manner. This is Sop-2-related protein 1 (sor-1) from Caenorhabditis elegans.